A 641-amino-acid chain; its full sequence is MGKIIGIDLGTTNSCVAVMEGDKAKVIENAEGARTTPSIVAFTEDGEVLVGQAAKRQAVTNPKNTLFAVKRLIGRRFEEPEVQKDIKLVPYEIFKADNGDAWVRVRDKKMAPPEISARVLQKMKKTAEDYLGEPVTEAVITVPAYFNDSQRQATKDAGKIAGLEVKRIINEPTAAALAYGLDKKRGDSKVAVYDLGGGTFDVSIIEIAEVDGEHQFEVLATNGDTFLGGEDFDMRLIDYLVEEFKKEQGIDLKGDPLAMQRLKESAEKAKIELSSSQQTDVNLPYITADASGPKHMNIKVTRAKLESLVEELIKRTIEPCKVALKDAGLSVSDIDDVILVGGQTRMPKVQDAVKNFFGKEPRKDVNPDEAVAVGAAIQAGVLGGEVKDVLLLDVTPLSLGIETLGGVMTKLIEKNTTIPTKATQVFSTADDNQTAVTVHVLQGEREMASANKSLGRFDLTDIPPAPRGVPQVEVMFDIDANGILNVSAKDKATGKQQSIVIKASSGLSDEEVERMVRDAEAHADEDKRFHELVAARNQADNLVHATEKSLKELGDQVEAGEKQAIESALSELREAMKGDNKDEIETRTQKLAEASGKLAERVYAKQSAEGGAGEGAGAEQASAQQDDVVDAEFEEVDDKKK.

Threonine 199 carries the phosphothreonine; by autocatalysis modification. A compositionally biased stretch (basic and acidic residues) spans 577 to 590 (KGDNKDEIETRTQK). The disordered stretch occupies residues 577–641 (KGDNKDEIET…EFEEVDDKKK (65 aa)). A compositionally biased stretch (low complexity) spans 617-626 (GAEQASAQQD). Over residues 627–641 (DVVDAEFEEVDDKKK) the composition is skewed to acidic residues.

The protein belongs to the heat shock protein 70 family.

Its function is as follows. Acts as a chaperone. The chain is Chaperone protein DnaK from Thioalkalivibrio sulfidiphilus (strain HL-EbGR7).